We begin with the raw amino-acid sequence, 137 residues long: Cytochrome c2 (137 aa).

The signal sequence occupies residues 1–21 (MKISLTAATVAALVLAAPAFA). C34, C37, H38, and M117 together coordinate heme c.

This sequence belongs to the cytochrome c family. In terms of processing, binds 1 heme c group covalently per subunit.

In terms of biological role, cytochrome c2 is found mainly in purple, non-sulfur, photosynthetic bacteria where it functions as the electron donor to the oxidized bacteriochlorophyll in the photophosphorylation pathway. However, it may also have a role in the respiratory chain and is found in some non-photosynthetic bacteria. In Rhodobacter capsulatus (strain ATCC BAA-309 / NBRC 16581 / SB1003), this protein is Cytochrome c2 (cycA).